The sequence spans 270 residues: Diaminopimelate epimerase (270 aa).

Residues N15, Q49, and N66 each contribute to the substrate site. The active-site Proton donor is C75. Substrate contacts are provided by residues 76-77 (GN), N155, N187, and 204-205 (ER). Residue C213 is the Proton acceptor of the active site. Substrate is bound at residue 214-215 (GS).

This sequence belongs to the diaminopimelate epimerase family. Homodimer.

Its subcellular location is the cytoplasm. It carries out the reaction (2S,6S)-2,6-diaminopimelate = meso-2,6-diaminopimelate. It functions in the pathway amino-acid biosynthesis; L-lysine biosynthesis via DAP pathway; DL-2,6-diaminopimelate from LL-2,6-diaminopimelate: step 1/1. Functionally, catalyzes the stereoinversion of LL-2,6-diaminopimelate (L,L-DAP) to meso-diaminopimelate (meso-DAP), a precursor of L-lysine and an essential component of the bacterial peptidoglycan. This is Diaminopimelate epimerase from Rickettsia africae (strain ESF-5).